Reading from the N-terminus, the 302-residue chain is Sulfate adenylyltransferase subunit 2 (302 aa).

Belongs to the PAPS reductase family. CysD subfamily. Heterodimer composed of CysD, the smaller subunit, and CysN.

It carries out the reaction sulfate + ATP + H(+) = adenosine 5'-phosphosulfate + diphosphate. Its pathway is sulfur metabolism; hydrogen sulfide biosynthesis; sulfite from sulfate: step 1/3. With CysN forms the ATP sulfurylase (ATPS) that catalyzes the adenylation of sulfate producing adenosine 5'-phosphosulfate (APS) and diphosphate, the first enzymatic step in sulfur assimilation pathway. APS synthesis involves the formation of a high-energy phosphoric-sulfuric acid anhydride bond driven by GTP hydrolysis by CysN coupled to ATP hydrolysis by CysD. The sequence is that of Sulfate adenylyltransferase subunit 2 from Escherichia coli O6:K15:H31 (strain 536 / UPEC).